We begin with the raw amino-acid sequence, 580 residues long: Type II methyltransferase M.BanIII (580 aa).

This sequence belongs to the N(4)/N(6)-methyltransferase family.

It catalyses the reaction a 2'-deoxyadenosine in DNA + S-adenosyl-L-methionine = an N(6)-methyl-2'-deoxyadenosine in DNA + S-adenosyl-L-homocysteine + H(+). Functionally, a gamma subtype methylase, recognizes the double-stranded sequence 5'-ATCGAT-3', methylates A-5 on both strands, and protects the DNA from cleavage by the BanIII endonuclease. The polypeptide is Type II methyltransferase M.BanIII (banIIIM) (Aneurinibacillus aneurinilyticus (Bacillus aneurinolyticus)).